The primary structure comprises 179 residues: Ribosome maturation factor RimM (179 aa).

The 72-residue stretch at 102-173 (PEEYHYRDLI…ALHVQPPPGL (72 aa)) folds into the PRC barrel domain.

Belongs to the RimM family. As to quaternary structure, binds ribosomal protein uS19.

It is found in the cytoplasm. In terms of biological role, an accessory protein needed during the final step in the assembly of 30S ribosomal subunit, possibly for assembly of the head region. Essential for efficient processing of 16S rRNA. May be needed both before and after RbfA during the maturation of 16S rRNA. It has affinity for free ribosomal 30S subunits but not for 70S ribosomes. This is Ribosome maturation factor RimM from Synechococcus sp. (strain JA-2-3B'a(2-13)) (Cyanobacteria bacterium Yellowstone B-Prime).